Here is a 630-residue protein sequence, read N- to C-terminus: 1-deoxy-D-xylulose-5-phosphate synthase (630 aa).

Thiamine diphosphate is bound by residues His-72 and 113–115 (GHS). Residue Asp-144 participates in Mg(2+) binding. Thiamine diphosphate-binding positions include 145-146 (GA), Asn-173, Tyr-284, and Glu-367. Position 173 (Asn-173) interacts with Mg(2+).

This sequence belongs to the transketolase family. DXPS subfamily. Homodimer. The cofactor is Mg(2+). Thiamine diphosphate is required as a cofactor.

It catalyses the reaction D-glyceraldehyde 3-phosphate + pyruvate + H(+) = 1-deoxy-D-xylulose 5-phosphate + CO2. Its pathway is metabolic intermediate biosynthesis; 1-deoxy-D-xylulose 5-phosphate biosynthesis; 1-deoxy-D-xylulose 5-phosphate from D-glyceraldehyde 3-phosphate and pyruvate: step 1/1. Catalyzes the acyloin condensation reaction between C atoms 2 and 3 of pyruvate and glyceraldehyde 3-phosphate to yield 1-deoxy-D-xylulose-5-phosphate (DXP). The sequence is that of 1-deoxy-D-xylulose-5-phosphate synthase from Bacillus cereus (strain B4264).